A 262-amino-acid polypeptide reads, in one-letter code: 2-keto-4-pentenoate hydratase (262 aa).

Belongs to the hydratase/decarboxylase family. MhpD subfamily. The cofactor is a divalent metal cation.

It carries out the reaction (S)-4-hydroxy-2-oxopentanoate = (2Z)-2-hydroxypenta-2,4-dienoate + H2O. Its pathway is aromatic compound metabolism; 3-phenylpropanoate degradation. Catalyzes the conversion of 2-hydroxypentadienoic acid (enolic form of 2-oxopent-4-enoate) to 4-hydroxy-2-ketopentanoic acid. In Burkholderia vietnamiensis (strain G4 / LMG 22486) (Burkholderia cepacia (strain R1808)), this protein is 2-keto-4-pentenoate hydratase.